Reading from the N-terminus, the 592-residue chain is Cell division protein FtsZ (592 aa).

GTP-binding positions include 24–28, 111–113, Glu-142, Arg-146, and Asp-190; these read GGGGN and GTG. A disordered region spans residues 333 to 362; it reads KFQKSVSSVRKNDSGINQTASHPQSSQLRS.

The protein belongs to the FtsZ family. As to quaternary structure, homodimer. Polymerizes to form a dynamic ring structure in a strictly GTP-dependent manner. Interacts directly with several other division proteins.

Its subcellular location is the cytoplasm. Its function is as follows. Essential cell division protein that forms a contractile ring structure (Z ring) at the future cell division site. The regulation of the ring assembly controls the timing and the location of cell division. One of the functions of the FtsZ ring is to recruit other cell division proteins to the septum to produce a new cell wall between the dividing cells. Binds GTP and shows GTPase activity. In Bartonella bacilliformis, this protein is Cell division protein FtsZ.